Reading from the N-terminus, the 925-residue chain is Colossin-D (925 aa).

Positions 1 to 26 (MIKVFKDLKFLILITIILLNLKSINC) are cleaved as a signal peptide. Asn47, Asn95, Asn142, Asn166, Asn283, Asn334, Asn344, Asn378, Asn401, Asn511, and Asn642 each carry an N-linked (GlcNAc...) asparagine glycan.

The protein belongs to the serine-aspartate repeat-containing protein (SDr) family.

The protein resides in the secreted. In Dictyostelium discoideum (Social amoeba), this protein is Colossin-D (colD).